A 362-amino-acid chain; its full sequence is MKSSILVKLETLVERYEEIQHLLGDPGIIGDQNKFRALSKEYSQLEDITQCFQAYLGAKDDLEAAEEMAKDDDPEMREMAQEEVKESKANILRLEDELQVLLIPKDPNDDRNCFVEIRAGAGGDEAGIFAGDLFRMYSRYAERRGWRIEVINENRSEQGGYKEMIAKVSGDGAYGVLKFESGGHRVQRVPATESQGRVHTSACTVAVMPEVPEAEIPEINTGDLKIDTFRSSGAGGQHVNTTDSAIRITHLPTGIVVECQDERSQHKNKAKAMSVLAARITKAEEEKRHAEEASTRRNLLGSGDRSDRIRTYNYPQGRVSDHRITLTLYRLNEVMEGDMDSLIQPVIQEHQADELAAMAEQN.

At Gln-237 the chain carries N5-methylglutamine. The segment covering 285–295 (EEKRHAEEAST) has biased composition (basic and acidic residues). The segment at 285-311 (EEKRHAEEASTRRNLLGSGDRSDRIRT) is disordered.

This sequence belongs to the prokaryotic/mitochondrial release factor family. Post-translationally, methylated by PrmC. Methylation increases the termination efficiency of RF1.

It localises to the cytoplasm. Functionally, peptide chain release factor 1 directs the termination of translation in response to the peptide chain termination codons UAG and UAA. The chain is Peptide chain release factor 1 from Photobacterium profundum (strain SS9).